Here is a 164-residue protein sequence, read N- to C-terminus: uncharacterized protein (164 aa).

The N-terminal 60 residues, 1 to 60, are a transit peptide targeting the chloroplast; that stretch reads MERSASVGVNDGRFGGNQFYSPSFSSSSSSSSMRHVNYSCGSCGYELNLSSTNRITSTIG.

Its subcellular location is the plastid. The protein localises to the chloroplast. This is an uncharacterized protein from Arabidopsis thaliana (Mouse-ear cress).